Consider the following 78-residue polypeptide: Large ribosomal subunit protein bL28 (78 aa).

The segment at 1–20 (MSRVCQVTGKGPVTGNNISH) is disordered.

The protein belongs to the bacterial ribosomal protein bL28 family.

In Pseudomonas fluorescens (strain ATCC BAA-477 / NRRL B-23932 / Pf-5), this protein is Large ribosomal subunit protein bL28.